Reading from the N-terminus, the 615-residue chain is Chaperone protein DnaK (615 aa).

Position 177 is a phosphothreonine; by autocatalysis (threonine 177). The interval 567–615 (TKESQGIAMKAYQKAQEKQAQEKGTQENTTAKNEKPQDEVVDADFEEKK) is disordered. Residues 581–591 (AQEKQAQEKGT) show a composition bias toward basic and acidic residues. Residues 605 to 615 (EVVDADFEEKK) show a composition bias toward acidic residues.

It belongs to the heat shock protein 70 family.

Acts as a chaperone. The polypeptide is Chaperone protein DnaK (Onion yellows phytoplasma (strain OY-M)).